Here is a 415-residue protein sequence, read N- to C-terminus: MFYKIKGTHDLLPTQTTSWQKVENSFHSFFKKHQFQEIRTPIMEYAEVFHRAAQHSEMVSKETYAFPDKKNRLITLRPEGTAGIVRSYIENKLDQTNKLQKFYYYGPYFRYERPQFGRYRQFHQLGVEVLGKTTPFLDIEVITLIYQFLKSLGLDDITIQINSLGSKEDHLDYVDIFKQYLKIYSNYLCGLCHERLNKNPLRIWDCKTCHLQDFLKQAPKIFDSLSPKSKKRFQTVLNGLEAMKVNFKTCHDLVRGLDYYTHTVFEITFNKMVLGGGGCYDHLVAALGGNQLSGIGFALGMERLMLTLQENNNFFVSPQPSLKLFLFILDPVFFHHGLTLVHILRNEGFCVEFNYSFTTFTKGLKEALKCLPNYLLILGHQEFAKKQITIKNIKTHTQTTIDQKDLIFYFQQQRV.

It belongs to the class-II aminoacyl-tRNA synthetase family. Homodimer.

It localises to the cytoplasm. It carries out the reaction tRNA(His) + L-histidine + ATP = L-histidyl-tRNA(His) + AMP + diphosphate + H(+). In Phytoplasma australiense, this protein is Histidine--tRNA ligase.